The primary structure comprises 864 residues: DNA mismatch repair protein MutS (864 aa).

ATP is bound at residue 623–630 (GPNMGGKS).

It belongs to the DNA mismatch repair MutS family.

Its function is as follows. This protein is involved in the repair of mismatches in DNA. It is possible that it carries out the mismatch recognition step. This protein has a weak ATPase activity. In Polaromonas sp. (strain JS666 / ATCC BAA-500), this protein is DNA mismatch repair protein MutS.